The chain runs to 455 residues: uncharacterized protein (455 aa).

Transmembrane regions (helical) follow at residues 19–39, 63–83, 106–126, 140–160, 173–195, 200–222, 265–285, 288–308, 324–344, 348–368, 388–408, and 410–430; these read FSLF…MFMG, ILNL…VIIS, FFIS…LLHM, FLQV…FSAI, VTIG…LFGF, VAGV…IVIV, MIVT…KVYT, ITMF…ILIG, MKSL…MTIF, LIGL…LIAM, AAGD…GIGL, and LAYL…ISFI.

Belongs to the multi antimicrobial extrusion (MATE) (TC 2.A.66.1) family.

It localises to the cell membrane. This is an uncharacterized protein from Bacillus subtilis (strain 168).